Consider the following 231-residue polypeptide: Transmembrane gamma-carboxyglutamic acid protein 3 (231 aa).

A propeptide spanning residues 1-19 is cleaved from the precursor; sequence MAVFLEAKDAHSVLKRFPR. The Gla domain maps to 20–65; it reads ANEFLEELRQGTIERECMEEICSYEEVKEVFENKEKTMEFWKGYPN. The Extracellular portion of the chain corresponds to 20-78; that stretch reads ANEFLEELRQGTIERECMEEICSYEEVKEVFENKEKTMEFWKGYPNAVYSVRDPSQSSD. 4-carboxyglutamate is present on residues glutamate 22, glutamate 25, glutamate 26, glutamate 33, glutamate 35, glutamate 38, glutamate 39, glutamate 44, glutamate 45, glutamate 48, glutamate 51, glutamate 54, and glutamate 58. The cysteines at positions 36 and 41 are disulfide-linked. Residues 79–101 traverse the membrane as a helical segment; sequence AMYVVVPLLGVALLIVIALFIIW. Residues 102–231 lie on the Cytoplasmic side of the membrane; it reads RCQLQKATRH…IVAANPGADK (130 aa). Disordered stretches follow at residues 140 to 165 and 182 to 231; these read HSQGEPSGHREAANSPQVVLGPSRGG and LSRL…GADK. Residues 202–213 show a composition bias toward low complexity; sequence ESSSEEASVSYS.

In terms of processing, gla residues are produced after subsequent post-translational modifications of glutamate by a vitamin K-dependent gamma-carboxylase. Expressed in brain, lung, kidney and heart.

Its subcellular location is the membrane. This is Transmembrane gamma-carboxyglutamic acid protein 3 (PRRG3) from Homo sapiens (Human).